The sequence spans 206 residues: Thymidylate kinase (206 aa).

10–17 is an ATP binding site; the sequence is GVDGVGKT.

This sequence belongs to the thymidylate kinase family.

The enzyme catalyses dTMP + ATP = dTDP + ADP. In terms of biological role, phosphorylation of dTMP to form dTDP in both de novo and salvage pathways of dTTP synthesis. This Bifidobacterium longum (strain NCC 2705) protein is Thymidylate kinase.